A 540-amino-acid polypeptide reads, in one-letter code: Acetyl-coenzyme A carboxylase carboxyl transferase subunit beta, chloroplastic (540 aa).

Residues 229-249 (YSDNGSSSIRTRTSTSSGSSY) are disordered. Over residues 233–248 (GSSSIRTRTSTSSGSS) the composition is skewed to low complexity. The CoA carboxyltransferase N-terminal domain occupies 267–538 (LWVQCENCYA…TFHPLKSNKV (272 aa)). C271, C274, C290, and C293 together coordinate Zn(2+). Residues 271–293 (CENCYALNYNKLFRSKMNVCEQC) form a C4-type zinc finger.

It belongs to the AccD/PCCB family. Acetyl-CoA carboxylase is a heterohexamer composed of biotin carboxyl carrier protein, biotin carboxylase and 2 subunits each of ACCase subunit alpha and ACCase plastid-coded subunit beta (accD). Zn(2+) serves as cofactor.

It is found in the plastid. Its subcellular location is the chloroplast stroma. The enzyme catalyses N(6)-carboxybiotinyl-L-lysyl-[protein] + acetyl-CoA = N(6)-biotinyl-L-lysyl-[protein] + malonyl-CoA. It participates in lipid metabolism; malonyl-CoA biosynthesis; malonyl-CoA from acetyl-CoA: step 1/1. Its function is as follows. Component of the acetyl coenzyme A carboxylase (ACC) complex. Biotin carboxylase (BC) catalyzes the carboxylation of biotin on its carrier protein (BCCP) and then the CO(2) group is transferred by the transcarboxylase to acetyl-CoA to form malonyl-CoA. This is Acetyl-coenzyme A carboxylase carboxyl transferase subunit beta, chloroplastic from Amborella trichopoda.